The primary structure comprises 496 residues: NADP-dependent glyceraldehyde-3-phosphate dehydrogenase (496 aa).

Residues arginine 116 and 169 to 170 (NY) contribute to the substrate site. NADP(+)-binding residues include lysine 192, threonine 195, and aspartate 230. 245–249 (GGDTG) contacts NAD(+). Catalysis depends on glutamate 264, which acts as the Proton acceptor. 297 to 299 (RCT) serves as a coordination point for substrate. The active-site Nucleophile is cysteine 298. Glutamate 391 provides a ligand contact to NADP(+). Arginine 451 contacts substrate.

Belongs to the aldehyde dehydrogenase family.

The protein localises to the cytoplasm. The catalysed reaction is D-glyceraldehyde 3-phosphate + NADP(+) + H2O = (2R)-3-phosphoglycerate + NADPH + 2 H(+). In terms of biological role, important as a means of generating NADPH for biosynthetic reactions. The chain is NADP-dependent glyceraldehyde-3-phosphate dehydrogenase (GAPN) from Nicotiana plumbaginifolia (Leadwort-leaved tobacco).